The sequence spans 452 residues: Sodium-coupled neutral amino acid transporter 7 (452 aa).

The next 11 membrane-spanning stretches (helical) occupy residues 46–66 (AVFI…PAAF), 74–94 (AAIS…VILA), 120–140 (LCEV…FIII), 168–188 (FTIS…REIS), 195–215 (FLSV…CIWP), 234–256 (VFNA…PVYG), 272–292 (IAMF…FLLF), 309–329 (IAVA…YPIL), 361–381 (VLQT…IPDI), 385–405 (ISLI…LCLI), and 419–439 (SWWA…FIFG).

The protein belongs to the amino acid/polyamine transporter 2 family.

Its subcellular location is the lysosome membrane. It localises to the cell projection. The protein resides in the axon. It catalyses the reaction L-asparagine(in) + Na(+)(in) = L-asparagine(out) + Na(+)(out). It carries out the reaction L-glutamine(in) + Na(+)(in) = L-glutamine(out) + Na(+)(out). Functionally, symporter that selectively cotransports sodium ions and amino acids, such as L-glutamine and L-asparagine from the lysosome into the cytoplasm and may participates in mTORC1 activation. The transport activity requires an acidic lysosomal lumen. This chain is Sodium-coupled neutral amino acid transporter 7, found in Xenopus laevis (African clawed frog).